The chain runs to 111 residues: UPF0145 protein RBAM_010660 (111 aa).

Belongs to the UPF0145 family.

This is UPF0145 protein RBAM_010660 from Bacillus velezensis (strain DSM 23117 / BGSC 10A6 / LMG 26770 / FZB42) (Bacillus amyloliquefaciens subsp. plantarum).